The primary structure comprises 450 residues: Glutamyl-tRNA(Gln) amidotransferase subunit A, mitochondrial (450 aa).

Catalysis depends on charge relay system residues Lys-47 and Ser-122. Catalysis depends on Ser-146, which acts as the Acyl-ester intermediate.

This sequence belongs to the amidase family. GatA subfamily. As to quaternary structure, subunit of the heterotrimeric GatFAB amidotransferase (AdT) complex, composed of A, B and F subunits.

Its subcellular location is the mitochondrion. It catalyses the reaction L-glutamyl-tRNA(Gln) + L-glutamine + ATP + H2O = L-glutaminyl-tRNA(Gln) + L-glutamate + ADP + phosphate + H(+). Allows the formation of correctly charged Gln-tRNA(Gln) through the transamidation of misacylated Glu-tRNA(Gln) in the mitochondria. The reaction takes place in the presence of glutamine and ATP through an activated gamma-phospho-Glu-tRNA(Gln). In Candida albicans (strain WO-1) (Yeast), this protein is Glutamyl-tRNA(Gln) amidotransferase subunit A, mitochondrial.